Reading from the N-terminus, the 244-residue chain is Ribosome maturation factor RimM (244 aa).

Residues 1–58 are disordered; the sequence is MSERDSGSSGPVKAKAAAPRAKTSGQAPFGAFVRKPVEKTEGKAKANAANAGSGATEM. A compositionally biased stretch (low complexity) spans 13 to 22; sequence KAKAAAPRAK. The segment covering 35 to 44 has biased composition (basic and acidic residues); the sequence is KPVEKTEGKA. Low complexity predominate over residues 45-57; that stretch reads KANAANAGSGATE. The PRC barrel domain occupies 163–244; the sequence is ADEFYWVDLL…QITVDWEADY (82 aa).

The protein belongs to the RimM family. In terms of assembly, binds ribosomal protein uS19.

It localises to the cytoplasm. Functionally, an accessory protein needed during the final step in the assembly of 30S ribosomal subunit, possibly for assembly of the head region. Essential for efficient processing of 16S rRNA. May be needed both before and after RbfA during the maturation of 16S rRNA. It has affinity for free ribosomal 30S subunits but not for 70S ribosomes. This Paraburkholderia xenovorans (strain LB400) protein is Ribosome maturation factor RimM.